We begin with the raw amino-acid sequence, 233 residues long: Probable tetraheme cytochrome c-type (233 aa).

The signal sequence occupies residues 1–28 (MTRLQKGSIGTLLTGALLGIVLVAVVFG). Heme is bound by residues C39, C42, M45, C67, C70, H71, E93, C131, C134, H135, C159, C162, H163, and H168. The interval 182-233 (QGKLVLKPEDDGDDEEADEDEDEETEEADDSSDSESASSSDNSDNEDDNNDE) is disordered. 2 stretches are compositionally biased toward acidic residues: residues 191–214 (DDGDDEEADEDEDEETEEADDSSD) and 224–233 (SDNEDDNNDE).

The protein belongs to the NapC/NirT/NrfH family. In terms of processing, binds 4 heme groups per subunit.

The protein resides in the periplasm. The protein is Probable tetraheme cytochrome c-type (cycX1) of Nitrosomonas europaea (strain ATCC 19718 / CIP 103999 / KCTC 2705 / NBRC 14298).